A 732-amino-acid polypeptide reads, in one-letter code: Myosin heavy chain kinase B (732 aa).

One can recognise an Alpha-type protein kinase domain in the interval 124-328 (DPYTTTAQWT…ICQYLNLQSI (205 aa)). Residue 298 to 303 (GIGNLG) coordinates ATP. The segment at 331-428 (KSEKSDCGTV…TNKERSKSKS (98 aa)) is disordered. Residues 356–394 (NNNNNNNNNNNNNNNNNNSNNNNNNNSSISKSLVEISSG) are compositionally biased toward low complexity. The span at 395–404 (SKERNDRDSP) shows a compositional bias: basic and acidic residues. Polar residues predominate over residues 405–419 (SRQLFVSNDGNTLNT). 7 WD repeats span residues 458–486 (KGYHVTSHLCICDNLLFTGCSDNSIRVYD), 500–528 (GHEGPVESICYNDQYLFSGSSDHSIKVWD), 540–568 (GHDKPVHTVLLNDKYLFSGSSDKTIKVWD), 580–608 (SHARAVKTLCISGQYLFSGSNDKTIKVWD), 620–648 (GHTKWVTTICILGTNLYSGSYDKTIRVWN), 660–688 (GHDRWVEHMVICDKLLFTASDDNTIKIWD), and 700–730 (GHNATVQCLAVWEDKKCVISCSHDQSIRVWG).

Belongs to the protein kinase superfamily. Alpha-type protein kinase family. ALPK subfamily.

The enzyme catalyses L-threonyl-[myosin heavy-chain] + ATP = O-phospho-L-threonyl-[myosin heavy-chain] + ADP + H(+). Catalyzes its autophosphorylation, which is needed for enzymatic activity and phosphorylates myosin II heavy chain at a threonine in the C-terminal tail region. This phosphorylation is critical in regulating the assembly and disassembly of myosin II filament. Participates in control of myosin localization. The sequence is that of Myosin heavy chain kinase B (mhkB) from Dictyostelium discoideum (Social amoeba).